A 181-amino-acid polypeptide reads, in one-letter code: ATP synthase subunit delta (181 aa).

The protein belongs to the ATPase delta chain family. As to quaternary structure, F-type ATPases have 2 components, F(1) - the catalytic core - and F(0) - the membrane proton channel. F(1) has five subunits: alpha(3), beta(3), gamma(1), delta(1), epsilon(1). F(0) has three main subunits: a(1), b(2) and c(10-14). The alpha and beta chains form an alternating ring which encloses part of the gamma chain. F(1) is attached to F(0) by a central stalk formed by the gamma and epsilon chains, while a peripheral stalk is formed by the delta and b chains.

The protein resides in the cell inner membrane. Functionally, f(1)F(0) ATP synthase produces ATP from ADP in the presence of a proton or sodium gradient. F-type ATPases consist of two structural domains, F(1) containing the extramembraneous catalytic core and F(0) containing the membrane proton channel, linked together by a central stalk and a peripheral stalk. During catalysis, ATP synthesis in the catalytic domain of F(1) is coupled via a rotary mechanism of the central stalk subunits to proton translocation. Its function is as follows. This protein is part of the stalk that links CF(0) to CF(1). It either transmits conformational changes from CF(0) to CF(1) or is implicated in proton conduction. The sequence is that of ATP synthase subunit delta from Chlorobium limicola (strain DSM 245 / NBRC 103803 / 6330).